The sequence spans 503 residues: Maturase K (503 aa).

The protein belongs to the intron maturase 2 family. MatK subfamily.

It localises to the plastid. Its subcellular location is the chloroplast. In terms of biological role, usually encoded in the trnK tRNA gene intron. Probably assists in splicing its own and other chloroplast group II introns. The sequence is that of Maturase K from Psilotum nudum (Whisk fern).